The sequence spans 517 residues: TBC1 domain family member 22A (517 aa).

Alanine 2 is modified (N-acetylalanine). Residues 103-191 are disordered; the sequence is RNHSQRQGRP…PSTLSSSALS (89 aa). Serine 132, serine 145, and serine 167 each carry phosphoserine. Polar residues predominate over residues 163–174; it reads QRSQSLPHSATV. Residues 176 to 190 show a composition bias toward low complexity; the sequence is LGGTSDPSTLSSSAL. Positions 222-446 constitute a Rab-GAP TBC domain; the sequence is GIPKPVRPMT…RLWDTYQSEP (225 aa).

In terms of assembly, homodimer. Interacts with ACBD3 and ARFGEF1. Interacts with YWHAB, YWHAE, YWHAG, YWHAH, YWHAQ and YWHAZ.

Functionally, may act as a GTPase-activating protein for Rab family protein(s). In Homo sapiens (Human), this protein is TBC1 domain family member 22A (TBC1D22A).